We begin with the raw amino-acid sequence, 207 residues long: Elongation factor 1-beta (207 aa).

Ala-2 bears the N-acetylalanine mark. The interval 70 to 96 is disordered; that stretch reads FPGIPTSASKEEDDDVDLFGSDEEDEE. Positions 80–96 are enriched in acidic residues; the sequence is EEDDDVDLFGSDEEDEE. A Phosphoserine; by CK2 modification is found at Ser-90.

It belongs to the EF-1-beta/EF-1-delta family. In terms of assembly, EF-1 is composed of 4 subunits: alpha, beta, delta, and gamma. In terms of processing, phosphorylation affects the GDP/GTP exchange rate.

Functionally, EF-1-beta and EF-1-delta stimulate the exchange of GDP bound to EF-1-alpha to GTP. The sequence is that of Elongation factor 1-beta from Artemia salina (Brine shrimp).